The sequence spans 639 residues: Extracellular metalloproteinase NpIII (639 aa).

An N-terminal signal peptide occupies residues 1-16; the sequence is MHMLLFIGALALPVFV. A propeptide spanning residues 17 to 245 is cleaved from the precursor; that stretch reads CTQSCEPASL…IHGVVDYVSE (229 aa). Asn287, Asn320, Asn336, and Asn368 each carry an N-linked (GlcNAc...) asparagine glycan. Position 429 (His429) interacts with Zn(2+). Glu430 is an active-site residue. Zn(2+) is bound at residue His433. Residue Asn509 is glycosylated (N-linked (GlcNAc...) asparagine).

Belongs to the peptidase M36 family. Zn(2+) is required as a cofactor.

It is found in the secreted. Secreted metalloproteinase that allows assimilation of proteinaceous substrates. This chain is Extracellular metalloproteinase NpIII (NpIII), found in Aspergillus oryzae (strain ATCC 42149 / RIB 40) (Yellow koji mold).